A 264-amino-acid chain; its full sequence is Phosphoribosylaminoimidazole-succinocarboxamide synthase (264 aa).

Belongs to the SAICAR synthetase family.

The catalysed reaction is 5-amino-1-(5-phospho-D-ribosyl)imidazole-4-carboxylate + L-aspartate + ATP = (2S)-2-[5-amino-1-(5-phospho-beta-D-ribosyl)imidazole-4-carboxamido]succinate + ADP + phosphate + 2 H(+). Its pathway is purine metabolism; IMP biosynthesis via de novo pathway; 5-amino-1-(5-phospho-D-ribosyl)imidazole-4-carboxamide from 5-amino-1-(5-phospho-D-ribosyl)imidazole-4-carboxylate: step 1/2. This is Phosphoribosylaminoimidazole-succinocarboxamide synthase (purC) from Synechocystis sp. (strain ATCC 27184 / PCC 6803 / Kazusa).